We begin with the raw amino-acid sequence, 294 residues long: tRNA dimethylallyltransferase (294 aa).

Gly-11–Thr-18 is a binding site for ATP. Residue Thr-13 to Thr-18 coordinates substrate. Residues Asp-36–Gln-39 form an interaction with substrate tRNA region.

Belongs to the IPP transferase family. In terms of assembly, monomer. The cofactor is Mg(2+).

It carries out the reaction adenosine(37) in tRNA + dimethylallyl diphosphate = N(6)-dimethylallyladenosine(37) in tRNA + diphosphate. Functionally, catalyzes the transfer of a dimethylallyl group onto the adenine at position 37 in tRNAs that read codons beginning with uridine, leading to the formation of N6-(dimethylallyl)adenosine (i(6)A). The protein is tRNA dimethylallyltransferase of Lactococcus lactis subsp. lactis (strain IL1403) (Streptococcus lactis).